We begin with the raw amino-acid sequence, 179 residues long: Large ribosomal subunit protein uL6 (179 aa).

The protein belongs to the universal ribosomal protein uL6 family. In terms of assembly, part of the 50S ribosomal subunit.

Its function is as follows. This protein binds to the 23S rRNA, and is important in its secondary structure. It is located near the subunit interface in the base of the L7/L12 stalk, and near the tRNA binding site of the peptidyltransferase center. The sequence is that of Large ribosomal subunit protein uL6 from Trichodesmium erythraeum (strain IMS101).